Consider the following 193-residue polypeptide: Ion-translocating oxidoreductase complex subunit A (193 aa).

Helical transmembrane passes span 5–25 (LLLFVGTVLVNNFVLVKFLGL), 47–67 (FVMTLASICAWLIDTWILIPL), 72–92 (LRTLSFILVIAVVVQFTEMVV), 102–122 (LLGIFLPLITTNCAVLGVALL), 134–154 (ALYGFSAAVGFSLVMVLFAAI), and 171–191 (AIALITAGLMSLAFMGFSGLV).

The protein belongs to the NqrDE/RnfAE family. The complex is composed of six subunits: RsxA, RsxB, RsxC, RsxD, RsxE and RsxG.

It is found in the cell inner membrane. Functionally, part of a membrane-bound complex that couples electron transfer with translocation of ions across the membrane. Required to maintain the reduced state of SoxR. This is Ion-translocating oxidoreductase complex subunit A from Salmonella arizonae (strain ATCC BAA-731 / CDC346-86 / RSK2980).